We begin with the raw amino-acid sequence, 187 residues long: Peptide deformylase (187 aa).

Fe cation is bound by residues cysteine 94 and histidine 136. Glutamate 137 is a catalytic residue. Residue histidine 140 coordinates Fe cation.

It belongs to the polypeptide deformylase family. Fe(2+) is required as a cofactor.

The catalysed reaction is N-terminal N-formyl-L-methionyl-[peptide] + H2O = N-terminal L-methionyl-[peptide] + formate. Its function is as follows. Removes the formyl group from the N-terminal Met of newly synthesized proteins. Requires at least a dipeptide for an efficient rate of reaction. N-terminal L-methionine is a prerequisite for activity but the enzyme has broad specificity at other positions. This is Peptide deformylase from Chlorobaculum parvum (strain DSM 263 / NCIMB 8327) (Chlorobium vibrioforme subsp. thiosulfatophilum).